A 313-amino-acid polypeptide reads, in one-letter code: MSVNMKGRSLLTLLDFSSEEIRYLLDISKQVKMESRSRLRTERFKGMTLAMIFEKRSTRTRLAFETAFAEEGGHAIFLSPNDIHLGTKESLEDTARVLGRMVDAIMFRGYKQETVEKLAEYSGVPVYNGLTDDFHPTQALADLMTIEENFGRLKGVKVVFMGDTRNNVATSLMIACAKMGMNFVACGPEELKPRPDIFERCQEIARETSASVSFTSNLEEALAGADVVYTDVWASMGEEDKEKERISLLKPYQVNKRVMEMTGKPETIFMHCLPAVKGQEVTYEVIEGKQSRVWDEAENRKHTIKAVMIATLL.

Residues 57 to 60 (STRT), Arg108, and 135 to 138 (HPTQ) each bind carbamoyl phosphate. L-ornithine is bound by residues Asn167, Asp231, and 235-236 (SM). Carbamoyl phosphate-binding positions include 272-273 (CL) and Arg300.

Belongs to the aspartate/ornithine carbamoyltransferase superfamily. OTCase family.

It localises to the cytoplasm. The enzyme catalyses carbamoyl phosphate + L-ornithine = L-citrulline + phosphate + H(+). It functions in the pathway amino-acid biosynthesis; L-arginine biosynthesis; L-arginine from L-ornithine and carbamoyl phosphate: step 1/3. Functionally, reversibly catalyzes the transfer of the carbamoyl group from carbamoyl phosphate (CP) to the N(epsilon) atom of ornithine (ORN) to produce L-citrulline. The protein is Ornithine carbamoyltransferase of Thermotoga petrophila (strain ATCC BAA-488 / DSM 13995 / JCM 10881 / RKU-1).